Reading from the N-terminus, the 347-residue chain is Ribosomal RNA small subunit methyltransferase C (347 aa).

Belongs to the methyltransferase superfamily. RsmC family. In terms of assembly, monomer.

It is found in the cytoplasm. The catalysed reaction is guanosine(1207) in 16S rRNA + S-adenosyl-L-methionine = N(2)-methylguanosine(1207) in 16S rRNA + S-adenosyl-L-homocysteine + H(+). Functionally, specifically methylates the guanine in position 1207 of 16S rRNA in the 30S particle. This chain is Ribosomal RNA small subunit methyltransferase C, found in Yersinia pseudotuberculosis serotype O:1b (strain IP 31758).